A 103-amino-acid chain; its full sequence is Transcriptional regulator WhiB7 (103 aa).

The [4Fe-4S] cluster site is built by C17, C49, C52, and C58. Residues 25–82 (PCHVGDPDLWFAENPGDLERAKALCAGCPIRVQCLTAALERQEPWGVWGGEILDRGSI) enclose the 4Fe-4S Wbl-type domain. The segment at 82–103 (IVARKRPRGRPRKDSGGNPAAA) is disordered.

The protein belongs to the WhiB family. It depends on [4Fe-4S] cluster as a cofactor. Post-translationally, the Fe-S cluster can be nitrosylated by nitric oxide (NO). In terms of processing, upon Fe-S cluster removal intramolecular disulfide bonds are formed.

The protein resides in the cytoplasm. Its function is as follows. Acts as a transcriptional regulator. Probably redox-responsive. The apo- but not holo-form probably binds DNA. Participates in maintaining a reduced cytoplasmic (MSH/MSSM) environment under normal growth conditions and directly or indirectly controls the concentration of mycothiol (MSH + MSSM). The sequence is that of Transcriptional regulator WhiB7 (whiB7) from Mycolicibacterium smegmatis (strain ATCC 700084 / mc(2)155) (Mycobacterium smegmatis).